Here is a 419-residue protein sequence, read N- to C-terminus: F-box/LRR-repeat protein At1g67190 (419 aa).

One can recognise an F-box domain in the interval 1–48 (MDYLPVEVIGNILSRLGGARDVVIASATCRKWREACRKHLQTLSFNSA). 9 LRR repeats span residues 53 to 82 (YRDL…SIMM), 96 to 124 (WLMY…EICG), 133 to 157 (LAHN…LSLS), 158 to 183 (YVSI…ELVS), 185 to 209 (EIAM…YFDG), 245 to 272 (HFKL…DVNH), 273 to 297 (FTMV…RLWD), 301 to 326 (DDDD…SLSY), and 356 to 381 (INDV…IIYG).

This is F-box/LRR-repeat protein At1g67190 from Arabidopsis thaliana (Mouse-ear cress).